A 64-amino-acid polypeptide reads, in one-letter code: Large ribosomal subunit protein bL28 (64 aa).

The tract at residues 1–23 (MARKDQISHRGPLSGNNRSHALN) is disordered.

The protein belongs to the bacterial ribosomal protein bL28 family.

In Mesomycoplasma hyopneumoniae (strain 232) (Mycoplasma hyopneumoniae), this protein is Large ribosomal subunit protein bL28.